Here is a 346-residue protein sequence, read N- to C-terminus: Sesquiterpene synthase Agr1 (346 aa).

Residues Asp-98, Asn-234, Ser-238, and Glu-242 each contribute to the Mg(2+) site. Positions 98 to 102 (DNLSD) match the DDXXD motif motif. Residues Arg-322 and Tyr-323 each coordinate (2E,6E)-farnesyl diphosphate.

The protein belongs to the terpene synthase family. Mg(2+) serves as cofactor.

The enzyme catalyses (2E,6E)-farnesyl diphosphate = delta-cadinene + diphosphate. The catalysed reaction is (2E,6E)-farnesyl diphosphate = alpha-muurolene + diphosphate. It carries out the reaction (2E,6E)-farnesyl diphosphate = gamma-muurolene + diphosphate. It catalyses the reaction (2E,6E)-farnesyl diphosphate = alpha-selinene + diphosphate. Its function is as follows. Terpene cyclase that catalyzes the cyclization of farnesyl diphosphate (FPP) to various sesquiterpenes, including alpha-muurolene, gamma-muurolene, alpha-selinene, beta-selinene, delta-cadinene, alpha-cadinol and delta-cadinol. Delta-cadinene is the major product of Agr1. The protein is Sesquiterpene synthase Agr1 of Cyclocybe aegerita (Black poplar mushroom).